The sequence spans 233 residues: Large ribosomal subunit protein uL1 (233 aa).

Belongs to the universal ribosomal protein uL1 family. As to quaternary structure, part of the 50S ribosomal subunit.

Its function is as follows. Binds directly to 23S rRNA. The L1 stalk is quite mobile in the ribosome, and is involved in E site tRNA release. In terms of biological role, protein L1 is also a translational repressor protein, it controls the translation of the L11 operon by binding to its mRNA. The protein is Large ribosomal subunit protein uL1 of Zymomonas mobilis subsp. mobilis (strain ATCC 31821 / ZM4 / CP4).